Consider the following 447-residue polypeptide: Probable arabinosyltransferase ARAD1 (447 aa).

Residues 1-6 (MARKSS) are Cytoplasmic-facing. The chain crosses the membrane as a helical; Signal-anchor for type II membrane protein span at residues 7–29 (LLKRAAIAVVSVIAIYVILNASV). Residues 30–447 (SRSLPSSSDL…TNQTGLITSI (418 aa)) lie on the Lumenal side of the membrane. The span at 32 to 41 (SLPSSSDLPR) shows a compositional bias: low complexity. Residues 32 to 52 (SLPSSSDLPRQLIREDDDDEG) are disordered. Asn427, Asn432, and Asn439 each carry an N-linked (GlcNAc...) asparagine glycan.

Belongs to the glycosyltransferase 47 family. As to quaternary structure, homodimer and heterodimer with ARAD2. Expressed in root vasculature, cotyledons, leaves, stems, vascular tissue of sepals, petals and stamens, pollen grains, mature siliques and abscission region of seeds.

The protein localises to the golgi apparatus membrane. Its function is as follows. Probable arabinosyl transferase responsible for the polymerization of arabinose into the arabinan of arabinogalactan. May function as inverting enzyme using UDP-beta-L-arabinopyranoside. May be important for arabinan side chains of rhamnogalacturonan I (RG-I), a major component of pectins. Cell wall pectic arabinans are involved in thigmomorphogenesis response of inflorescence stems to mechanical stress. The chain is Probable arabinosyltransferase ARAD1 (ARAD1) from Arabidopsis thaliana (Mouse-ear cress).